The following is a 316-amino-acid chain: D-alanine--D-alanine ligase (316 aa).

One can recognise an ATP-grasp domain in the interval lysine 112–glutamate 310. Residue methionine 139–threonine 189 participates in ATP binding. Residues aspartate 261, glutamate 277, and asparagine 279 each contribute to the Mg(2+) site.

The protein belongs to the D-alanine--D-alanine ligase family. The cofactor is Mg(2+). It depends on Mn(2+) as a cofactor.

It localises to the cytoplasm. It catalyses the reaction 2 D-alanine + ATP = D-alanyl-D-alanine + ADP + phosphate + H(+). The protein operates within cell wall biogenesis; peptidoglycan biosynthesis. Functionally, cell wall formation. This is D-alanine--D-alanine ligase from Jannaschia sp. (strain CCS1).